A 337-amino-acid polypeptide reads, in one-letter code: N-acetyl-gamma-glutamyl-phosphate reductase (337 aa).

Cys-155 is a catalytic residue.

The protein belongs to the NAGSA dehydrogenase family. Type 1 subfamily.

It is found in the cytoplasm. The catalysed reaction is N-acetyl-L-glutamate 5-semialdehyde + phosphate + NADP(+) = N-acetyl-L-glutamyl 5-phosphate + NADPH + H(+). It participates in amino-acid biosynthesis; L-arginine biosynthesis; N(2)-acetyl-L-ornithine from L-glutamate: step 3/4. In terms of biological role, catalyzes the NADPH-dependent reduction of N-acetyl-5-glutamyl phosphate to yield N-acetyl-L-glutamate 5-semialdehyde. This chain is N-acetyl-gamma-glutamyl-phosphate reductase, found in Alteromonas mediterranea (strain DSM 17117 / CIP 110805 / LMG 28347 / Deep ecotype).